A 292-amino-acid chain; its full sequence is E3 ubiquitin-protein ligase trim-21 (292 aa).

The segment at 6–52 (CEICDDDFSSEEDGDHNPRNLKCSHTLCEGCIKKLLKNGRVVCPFCR) adopts an RING-type zinc-finger fold. The B box-type zinc finger occupies 90-137 (NFPPKCVEHPYNVAEFACIESNCSSKNKLMCQTCEEFGAHKGHAKELL). 4 residues coordinate Zn(2+): cysteine 95, histidine 98, cysteine 123, and histidine 129. The stretch at 152 to 179 (INQLKLNIQNCTVKKNELEEAVVKSEQL) forms a coiled coil.

Belongs to the TRIM/RBCC family. In terms of assembly, interacts with E2 ubiquitin-conjugating enzyme ubc-21. Interacts with ced-6; this mediates interaction of trim-21 with ced-1 and is required for ced-1 ubiquitination. Interacts with nck-1; the interaction is required for ced-1 ubiquitination. In early larva, observed mainly in pharyngeal and body wall muscle cells.

It localises to the cytoplasm. It carries out the reaction S-ubiquitinyl-[E2 ubiquitin-conjugating enzyme]-L-cysteine + [acceptor protein]-L-lysine = [E2 ubiquitin-conjugating enzyme]-L-cysteine + N(6)-ubiquitinyl-[acceptor protein]-L-lysine.. Its pathway is protein modification; protein ubiquitination. Its function is as follows. E3 ubiquitin-protein ligase which catalyzes 'Lys-48'-linked polyubiquitination of ced-1, promoting its proteasomal degradation to maintain appropriate ced-1 levels for apoptotic cell clearance. Acts together with E2 ubiquitin-conjugating enzyme ubc-21. This is E3 ubiquitin-protein ligase trim-21 from Caenorhabditis elegans.